Consider the following 739-residue polypeptide: MGSNECPYSRQNANIGGGGQNNRDWWPDDLKLNILRQHNSVSNPLDKGFDYTAAFNSLDYFGLKRDLEALMTDSQDWWPADFGHYGGLFIRMAWHSAGTYRVFDGRGGGGQGQQRFAPLNSWPDNVSLDKARRLLWPIKQKYGSKISWADLLILAGNVALESMGFKTFGFAGGRSDTWEADQSVFWGGEKEWLGNDVRYLNGELDNPLAASHMGLIYVNPEGPNKNPDPVLAAKDIRITFGRMAMNDEETVALIAGGHTFGKTHGAGPATHLGKEPHGAGIELQGLGWESGFESGTGRHAITSGLEVIWTKTPTKWSNQFFEYLFKYDWELTKSPAGAHQYVAKGVEPFIPDPFDPSIKHPPRMLTTDLSLRYDPEYEKISRRFLENPDQFADAFARAWFKLTHRDVGPRVLYQGPEVPSEVLIWQDPVPPLDHPVIDNDDIATLKKAILNSGISHTDLFSTAWASASTFRGSDKRGGANGARIRLSPQKNWKVNSQPWLSESLAALEKIQKQFNDAQSTDKRVSLADLIVLAGAASLEKAARDAGHNVSVSFTPGRTDATQEQTDVDSFNNLEPIADGFRNYGRGTPRVLTEDFLIDKAQLLNLSPPELTVLIGGLRVLNNNYDRSNLGVFTKRPGQLTNDFFVNLLDMGVQWKPADDTNEIFIGSDRKTGQARWKASRADLVFGSHAELRAISEVYGSSDGEAKFVKDFVAAWEKVSNLDRFDLKQTGLAQRIKPQL.

A disordered region spans residues 1–20 (MGSNECPYSRQNANIGGGGQ). The segment at residues 94–217 (WHSAGTYRVF…LAASHMGLIY (124 aa)) is a cross-link (tryptophyl-tyrosyl-methioninium (Trp-Tyr) (with M-243)). The active-site Proton acceptor is His95. The tryptophyl-tyrosyl-methioninium (Tyr-Met) (with W-94) cross-link spans 217–243 (YVNPEGPNKNPDPVLAAKDIRITFGRM). His258 contacts heme b.

Belongs to the peroxidase family. Peroxidase/catalase subfamily. In terms of assembly, homodimer or homotetramer. It depends on heme b as a cofactor. Formation of the three residue Trp-Tyr-Met cross-link is important for the catalase, but not the peroxidase activity of the enzyme.

The protein localises to the cytoplasm. The catalysed reaction is H2O2 + AH2 = A + 2 H2O. It catalyses the reaction 2 H2O2 = O2 + 2 H2O. Bifunctional enzyme with both catalase and broad-spectrum peroxidase activity. The chain is Catalase-peroxidase from Emericella nidulans (strain FGSC A4 / ATCC 38163 / CBS 112.46 / NRRL 194 / M139) (Aspergillus nidulans).